The chain runs to 727 residues: FACT complex subunit Ssrp1 (727 aa).

2 disordered regions span residues 458–565 (AEAR…AFML) and 596–727 (ELKD…EGSD). Composition is skewed to acidic residues over residues 464-479 (EEED…ESTD) and 487-508 (NESD…DDSD). A compositionally biased stretch (gly residues) spans 510–519 (SGGGGDGGTD). 3 stretches are compositionally biased toward basic and acidic residues: residues 529–555 (KKNE…DTGK), 596–620 (ELKD…EMRN), and 675–703 (DQEK…KSES). A DNA-binding region (HMG box) is located at residues 556-622 (PKRGTSAFML…RYQEEMRNYK (67 aa)). The segment covering 704–727 (EGGDSDDASNASEDDDEEEDEGSD) has biased composition (acidic residues).

This sequence belongs to the SSRP1 family. Component of the FACT complex, a stable heterodimer of dre4/spt16 and Ssrp.

The protein localises to the nucleus. The protein resides in the chromosome. It is found in the nucleolus. Its function is as follows. Component of the FACT complex, a general chromatin factor that acts to reorganize nucleosomes. The FACT complex is involved in multiple processes that require DNA as a template such as mRNA elongation, DNA replication and DNA repair. During transcription elongation the FACT complex acts as a histone chaperone that both destabilizes and restores nucleosomal structure. It facilitates the passage of RNA polymerase II and transcription by promoting the dissociation of one histone H2A-H2B dimer from the nucleosome, then subsequently promotes the reestablishment of the nucleosome following the passage of RNA polymerase II. Binds specifically to single-stranded DNA and RNA with highest affinity for nucleotides G and U. The FACT complex is required for expression of Hox genes. In Drosophila pseudoobscura pseudoobscura (Fruit fly), this protein is FACT complex subunit Ssrp1 (Ssrp).